The chain runs to 611 residues: MPPYRSRTTTHGRNMAGARGLWRATGMKDEDFGKPIIAVVNSFTQFVPGHVHLKDLGQLVAREIESAGGVAKEFNTIAVDDGIAMGHDGMLYSLPSRELIADSVEYMVNAHCADAMVCISNCDKITPGMLMAALRLNIPVVFVSGGPMEAGKVVWEDSVKKLDLVDAMVAAADDHYTDEQVKAIERSACPTCGSCSGMFTANSMNCLTEALGLSLPGNGSTLATHADRKRLFVEAGHLIVDLARRYYEQDDESVLPRSIATFSAFENAMTLDIAMGGSTNTVLHLLAAAQEAEIDFTMADIDRLSRRVPVLCKVAPAVSSVHMEDVHHAGGIMGILGQLDNAGLLTTSIPTVHSETLAKALDHWDVTRTNSEMVHKFYSAAPGGVPTQVAFSQERRFDKVDTDREKGVIRSKEHAFSQDGGLAVLYGNLAEDGCIVKTAGVDDSILKFSGPARIFESQDSAVLGILNGKIKPGDIVLIRYEGPRGGPGMQEMLYPTSYLKSKGLGKACALITDGRFSGGSSGLSIGHVSPEAAEGGTIGLVREGDIIDIDIPNRKIHLAVDDATLAERRAEQDAAGWKPAEERKRKISTALKAYAAMATSAARGAVRKLPD.

Position 81 (Asp81) interacts with Mg(2+). Cys122 serves as a coordination point for [2Fe-2S] cluster. Mg(2+)-binding residues include Asp123 and Lys124. Lys124 is modified (N6-carboxylysine). Cys195 is a binding site for [2Fe-2S] cluster. Glu491 contributes to the Mg(2+) binding site. Ser517 acts as the Proton acceptor in catalysis.

This sequence belongs to the IlvD/Edd family. As to quaternary structure, homodimer. It depends on [2Fe-2S] cluster as a cofactor. Mg(2+) serves as cofactor.

The catalysed reaction is (2R)-2,3-dihydroxy-3-methylbutanoate = 3-methyl-2-oxobutanoate + H2O. The enzyme catalyses (2R,3R)-2,3-dihydroxy-3-methylpentanoate = (S)-3-methyl-2-oxopentanoate + H2O. Its pathway is amino-acid biosynthesis; L-isoleucine biosynthesis; L-isoleucine from 2-oxobutanoate: step 3/4. It participates in amino-acid biosynthesis; L-valine biosynthesis; L-valine from pyruvate: step 3/4. Functionally, functions in the biosynthesis of branched-chain amino acids. Catalyzes the dehydration of (2R,3R)-2,3-dihydroxy-3-methylpentanoate (2,3-dihydroxy-3-methylvalerate) into 2-oxo-3-methylpentanoate (2-oxo-3-methylvalerate) and of (2R)-2,3-dihydroxy-3-methylbutanoate (2,3-dihydroxyisovalerate) into 2-oxo-3-methylbutanoate (2-oxoisovalerate), the penultimate precursor to L-isoleucine and L-valine, respectively. The protein is Dihydroxy-acid dehydratase of Brucella abortus (strain S19).